Here is a 223-residue protein sequence, read N- to C-terminus: Adenylate kinase (223 aa).

10 to 15 provides a ligand contact to ATP; it reads GAGKGT. Residues 30-59 are NMP; it reads STGDILRQAVKEGTEVGKIAGELMKAGKLI. Residues Thr-31, Arg-36, 57-59, 85-88, and Gln-92 each bind AMP; these read KLI and GFPR. Positions 126–163 are LID; the sequence is GRYVCAQCGAGYHDEFKRPHKEGVCDICGSTEFKRRPD. Arg-127 is an ATP binding site. Positions 130, 133, 150, and 153 each coordinate Zn(2+). Positions 160 and 172 each coordinate AMP. Leu-200 contacts ATP.

It belongs to the adenylate kinase family. Monomer.

The protein localises to the cytoplasm. It carries out the reaction AMP + ATP = 2 ADP. Its pathway is purine metabolism; AMP biosynthesis via salvage pathway; AMP from ADP: step 1/1. Functionally, catalyzes the reversible transfer of the terminal phosphate group between ATP and AMP. Plays an important role in cellular energy homeostasis and in adenine nucleotide metabolism. In Zymomonas mobilis subsp. mobilis (strain ATCC 31821 / ZM4 / CP4), this protein is Adenylate kinase.